A 167-amino-acid polypeptide reads, in one-letter code: 2-C-methyl-D-erythritol 2,4-cyclodiphosphate synthase (167 aa).

2 residues coordinate a divalent metal cation: D10 and H12. 4-CDP-2-C-methyl-D-erythritol 2-phosphate-binding positions include 10–12 and 36–37; these read DVH and HS. H44 serves as a coordination point for a divalent metal cation. 4-CDP-2-C-methyl-D-erythritol 2-phosphate is bound by residues 58-60, 63-67, 134-137, F141, and R144; these read NIG, FPNTN, and TTSE.

Belongs to the IspF family. Homotrimer. It depends on a divalent metal cation as a cofactor.

It catalyses the reaction 4-CDP-2-C-methyl-D-erythritol 2-phosphate = 2-C-methyl-D-erythritol 2,4-cyclic diphosphate + CMP. The protein operates within isoprenoid biosynthesis; isopentenyl diphosphate biosynthesis via DXP pathway; isopentenyl diphosphate from 1-deoxy-D-xylulose 5-phosphate: step 4/6. Its function is as follows. Involved in the biosynthesis of isopentenyl diphosphate (IPP) and dimethylallyl diphosphate (DMAPP), two major building blocks of isoprenoid compounds. Catalyzes the conversion of 4-diphosphocytidyl-2-C-methyl-D-erythritol 2-phosphate (CDP-ME2P) to 2-C-methyl-D-erythritol 2,4-cyclodiphosphate (ME-CPP) with a corresponding release of cytidine 5-monophosphate (CMP). The protein is 2-C-methyl-D-erythritol 2,4-cyclodiphosphate synthase of Azobacteroides pseudotrichonymphae genomovar. CFP2.